The sequence spans 1704 residues: Arf-GAP with Rho-GAP domain, ANK repeat and PH domain-containing protein 2 (1704 aa).

The 65-residue stretch at E6 to K70 folds into the SAM domain. Phosphotyrosine is present on Y77. Residues N126–L161 form a disordered region. The segment covering S142–H160 has biased composition (basic and acidic residues). 2 PH domains span residues K482–K574 and T587–A679. One can recognise an Arf-GAP domain in the interval Q676–E811. The C4-type zinc-finger motif lies at C700–C723. PH domains are found at residues D878–V1003 and D1014–D1114. The 182-residue stretch at N1116–F1297 folds into the Rho-GAP domain. A Ras-associating domain is found at G1326–T1420. In terms of domain architecture, PH 5 spans G1434–H1537. Residue S1632 is modified to Phosphoserine. Positions L1636 to L1675 are disordered. Residues R1658–L1675 are compositionally biased toward basic and acidic residues.

In terms of tissue distribution, detected in brain, thymus, lymph node, thyroid, spinal cord, trachea, heart, skeletal muscle, spleen, kidney, liver, placenta, lung and peripheral blood leukocytes.

It localises to the cytoplasm. In terms of biological role, phosphatidylinositol 3,4,5-trisphosphate-dependent GTPase-activating protein that modulates actin cytoskeleton remodeling by regulating ARF and RHO family members. Is activated by phosphatidylinositol 3,4,5-trisphosphate (PtdIns(3,4,5)P3) binding. Can be activated by phosphatidylinositol 3,4-bisphosphate (PtdIns(3,4,5)P2) binding, albeit with lower efficiency. The chain is Arf-GAP with Rho-GAP domain, ANK repeat and PH domain-containing protein 2 (ARAP2) from Homo sapiens (Human).